The chain runs to 186 residues: Single-stranded DNA-binding protein 1 (186 aa).

Residues 1–108 enclose the SSB domain; the sequence is MDATVTVVGN…LEIDEIGPTL (108 aa). Residues 119–186 are disordered; that stretch reads TQAGHGVSPD…EDFDSDEVPF (68 aa). Positions 175 to 186 are enriched in acidic residues; the sequence is SYEDFDSDEVPF.

In terms of assembly, homotetramer.

The protein is Single-stranded DNA-binding protein 1 (ssb1) of Tropheryma whipplei (strain Twist) (Whipple's bacillus).